The sequence spans 211 residues: MAVVSLLLFGGLWSAVGSSNLAVVTCGSVVKLLNTRHNVRLHSHDVRYGSGSGQQSVTGVTSVDDSNSYWRIRGKTATVCERGTPIRCGQPIRLTHVNTGRNLHSHHFTSPLSGNQEVSAFGEEGEGDYLDDWTVLCNGPYWVRDGEVRFKHSSTEVLLSVTGEQYGRPISGQKEVHGMAQPSQNNYWKAMEGIFMKPSELLKAEGHHTEL.

The first 18 residues, 1–18 (MAVVSLLLFGGLWSAVGS), serve as a signal peptide directing secretion. MIR domains are found at residues 21–75 (LAVV…IRGK), 83–138 (GTPI…VLCN), and 139–193 (GPYW…AMEG).

The protein localises to the secreted. This chain is Stromal cell-derived factor 2 (SDF2), found in Bos taurus (Bovine).